A 686-amino-acid polypeptide reads, in one-letter code: Translation initiation factor IF-2 (686 aa).

Positions 54–105 are disordered; the sequence is KPSVADEFEVEEKVVRSKKNSNKKKKKGKGNEDKRQENFAGRQQTQTVETPD. Basic residues predominate over residues 69–81; the sequence is RSKKNSNKKKKKG. The 170-residue stretch at 188–357 folds into the tr-type G domain; it reads ERPAVVTIMG…LLVSEVEEYK (170 aa). The tract at residues 197–204 is G1; the sequence is GHVDHGKT. Residue 197–204 coordinates GTP; sequence GHVDHGKT. Residues 222 to 226 form a G2 region; it reads GITQH. Residues 243–246 are G3; sequence DTPG. Residues 243-247 and 297-300 each bind GTP; these read DTPGH and NKMD. Residues 297-300 form a G4 region; sequence NKMD. The tract at residues 333 to 335 is G5; that stretch reads SAI.

It belongs to the TRAFAC class translation factor GTPase superfamily. Classic translation factor GTPase family. IF-2 subfamily.

Its subcellular location is the cytoplasm. Functionally, one of the essential components for the initiation of protein synthesis. Protects formylmethionyl-tRNA from spontaneous hydrolysis and promotes its binding to the 30S ribosomal subunits. Also involved in the hydrolysis of GTP during the formation of the 70S ribosomal complex. This is Translation initiation factor IF-2 from Bacillus cereus (strain 03BB102).